Reading from the N-terminus, the 310-residue chain is 4-hydroxyproline epimerase (310 aa).

Catalysis depends on Cys-88, which acts as the Proton acceptor. Substrate is bound by residues Gly-89 to His-90, His-208, and Asp-232. The Proton donor role is filled by Cys-236. Residue Gly-237–Thr-238 participates in substrate binding.

The protein belongs to the proline racemase family. Homodimer.

It catalyses the reaction trans-4-hydroxy-L-proline = cis-4-hydroxy-D-proline. Inhibited by iodoacetate, iodoacetamide and by high amounts (10 mM) of pyrrole-2-carboxylic acid (PYC). Not inhibited by PYC at 1 mM. Allows intracellular utilization of 4-hydroxyproline, one of the major constituents of host collagen, by converting 4-hydroxy-L-proline to 4-hydroxy-D-proline, which can be further metabolized by intracellular 4-hydroxy-D-proline oxidases. The protein is 4-hydroxyproline epimerase of Burkholderia pseudomallei (strain K96243).